We begin with the raw amino-acid sequence, 1796 residues long: Non-reducing polyketide synthase nscA (1796 aa).

Residues 18 to 256 (DDLKDLFRRL…PLPVYDGLCH (239 aa)) are N-terminal acylcarrier protein transacylase domain (SAT). The Ketosynthase family 3 (KS3) domain maps to 392–825 (SSKLAIVGMA…GGNTTLLLED (434 aa)). Residues C565, H700, and H743 each act as for beta-ketoacyl synthase activity in the active site. Positions 931–1251 (FTGQGAYYSG…SLVTLHLAGL (321 aa)) are malonyl-CoA:ACP transacylase (MAT) domain. Residues 1317-1636 (TSLVHQITAE…RLLMDRFFSP (320 aa)) are product template (PT) domain. The segment at 1321–1457 (HQITAETVEA…ATVRFEDPVA (137 aa)) is N-terminal hotdog fold. In terms of domain architecture, PKS/mFAS DH spans 1321–1631 (HQITAETVEA…FRRVPRLLMD (311 aa)). The Proton acceptor; for dehydratase activity role is filled by H1353. Positions 1485 to 1631 (ASRLSKPLAY…FRRVPRLLMD (147 aa)) are C-terminal hotdog fold. D1542 (proton donor; for dehydratase activity) is an active-site residue. Residues 1688–1720 (TPESTPPLAPSSESSTPKESPIATPPESERADP) form a disordered region. Over residues 1697–1708 (PSSESSTPKESP) the composition is skewed to low complexity. Residues 1719 to 1796 (DPMDNMVSQC…EMTAWIEEYC (78 aa)) form the Carrier domain. S1756 is subject to O-(pantetheine 4'-phosphoryl)serine.

Pantetheine 4'-phosphate serves as cofactor.

Its pathway is secondary metabolite biosynthesis. In terms of biological role, non-reducing polyketide synthase; part of the gene cluster that mediates the biosynthesis of neosartoricin B, a prenylated anthracenone that probably exhibits T-cell antiproliferative activity, suggestive of a physiological role as an immunosuppressive agent. The non-reducing polyketide synthase nscA probably synthesizes and cyclizes the decaketide backbone. The hydrolase nscB then mediates the product release through hydrolysis followed by spontaneous decarboxylation. The prenyltransferase nscD catalyzes the addition of the dimethylallyl group to the aromatic C5. The FAD-dependent monooxygenase nscC is then responsible for the stereospecific hydroxylation at C2. Neosartoricin B can be converted into two additional compounds neosartoricins C and D. Neosartoricin C is a spirocyclic compound that is cyclized through the attack of C3 hydroxyl on C14, followed by dehydration. On the other hand, neosartoricin D is a further cyclized compound in which attack of C2 on C14 in neosartoricin C results in the formation of the acetal-containing dioxabicyclo-octanone ring. Both of these compounds are novel and possibly represent related metabolites of the gene cluster. This is Non-reducing polyketide synthase nscA from Arthroderma otae (strain ATCC MYA-4605 / CBS 113480) (Microsporum canis).